A 117-amino-acid chain; its full sequence is G antigen 12J (117 aa).

The disordered stretch occupies residues 1-117; that stretch reads MSWRGRSTYY…PEEGEKQSQC (117 aa). 2 stretches are compositionally biased toward acidic residues: residues 32–45 and 87–96; these read FSDE…EEGE and ECEDGPDGQE. Residues 103-117 are compositionally biased toward basic and acidic residues; that stretch reads EEVKTPEEGEKQSQC.

It belongs to the GAGE family.

In Homo sapiens (Human), this protein is G antigen 12J (GAGE12J).